The following is a 154-amino-acid chain: Prefoldin subunit 2 (154 aa).

A compositionally biased stretch (gly residues) spans 1–18; sequence MAENGGRAGKSSGSGTGK. Disordered stretches follow at residues 1–20 and 124–154; these read MAENGGRAGKSSGSGTGKGA and IRLMGEDEKPAAKENSEGAGAKASSAGVLVS. The segment covering 124–139 has biased composition (basic and acidic residues); sequence IRLMGEDEKPAAKENS. A compositionally biased stretch (low complexity) spans 140–154; sequence EGAGAKASSAGVLVS.

Belongs to the prefoldin subunit beta family. As to quaternary structure, heterohexamer of two PFD-alpha type and four PFD-beta type subunits. Component of the PAQosome complex which is responsible for the biogenesis of several protein complexes and which consists of R2TP complex members RUVBL1, RUVBL2, RPAP3 and PIH1D1, URI complex members PFDN2, PFDN6, PDRG1, UXT and URI1 as well as ASDURF, POLR2E and DNAAF10/WDR92. Interacts with URI1; the interaction is phosphorylation-dependent and occurs in a growth-dependent manner.

Its subcellular location is the nucleus. The protein resides in the cytoplasm. It localises to the mitochondrion. In terms of biological role, binds specifically to cytosolic chaperonin (c-CPN) and transfers target proteins to it. Binds to nascent polypeptide chain and promotes folding in an environment in which there are many competing pathways for nonnative proteins. This Bos taurus (Bovine) protein is Prefoldin subunit 2 (PFDN2).